A 652-amino-acid chain; its full sequence is 1,4-alpha-glucan branching enzyme GlgB (652 aa).

The Nucleophile role is filled by D322. The active-site Proton donor is the E373.

Belongs to the glycosyl hydrolase 13 family. GlgB subfamily. As to quaternary structure, monomer.

It carries out the reaction Transfers a segment of a (1-&gt;4)-alpha-D-glucan chain to a primary hydroxy group in a similar glucan chain.. Its pathway is glycan biosynthesis; glycogen biosynthesis. In terms of biological role, catalyzes the formation of the alpha-1,6-glucosidic linkages in glycogen by scission of a 1,4-alpha-linked oligosaccharide from growing alpha-1,4-glucan chains and the subsequent attachment of the oligosaccharide to the alpha-1,6 position. This chain is 1,4-alpha-glucan branching enzyme GlgB, found in Deinococcus geothermalis (strain DSM 11300 / CIP 105573 / AG-3a).